The primary structure comprises 267 residues: Distal basal body ring component protein (267 aa).

Positions Met1 to Leu29 are cleaved as a signal peptide.

In terms of assembly, flaD is a subunit of the flagellar transenvelope basal body.

It is found in the periplasm. The protein resides in the bacterial flagellum basal body. Its function is as follows. FlaD might be the structural protein of the distal basal body ring P, or it is necessary for the assembly of the P ring. This is Distal basal body ring component protein (flaD) from Caulobacter vibrioides (strain ATCC 19089 / CIP 103742 / CB 15) (Caulobacter crescentus).